Consider the following 92-residue polypeptide: MPRSLKKGPFIDLHLLKKVEKAVESGDKKPIRTWSRRSTIFPTMIGLTIAVHNGRQHVPVFVADEMVGHKLGEFAPTRTYRGHAADKKAKKR.

The protein belongs to the universal ribosomal protein uS19 family.

Functionally, protein S19 forms a complex with S13 that binds strongly to the 16S ribosomal RNA. The sequence is that of Small ribosomal subunit protein uS19 from Sodalis glossinidius (strain morsitans).